The sequence spans 269 residues: Putative pyruvate, phosphate dikinase regulatory protein (269 aa).

Residue 151–158 (GVSRSSKT) participates in ADP binding.

Belongs to the pyruvate, phosphate/water dikinase regulatory protein family. PDRP subfamily.

The catalysed reaction is N(tele)-phospho-L-histidyl/L-threonyl-[pyruvate, phosphate dikinase] + ADP = N(tele)-phospho-L-histidyl/O-phospho-L-threonyl-[pyruvate, phosphate dikinase] + AMP + H(+). The enzyme catalyses N(tele)-phospho-L-histidyl/O-phospho-L-threonyl-[pyruvate, phosphate dikinase] + phosphate + H(+) = N(tele)-phospho-L-histidyl/L-threonyl-[pyruvate, phosphate dikinase] + diphosphate. Bifunctional serine/threonine kinase and phosphorylase involved in the regulation of the pyruvate, phosphate dikinase (PPDK) by catalyzing its phosphorylation/dephosphorylation. The polypeptide is Putative pyruvate, phosphate dikinase regulatory protein (Geobacter sulfurreducens (strain ATCC 51573 / DSM 12127 / PCA)).